The sequence spans 202 residues: Small ribosomal subunit protein uS4c (202 aa).

Basic residues predominate over residues Met-1–Arg-13. Positions Met-1 to Lys-41 are disordered. A compositionally biased stretch (low complexity) spans Lys-29–Lys-41. Residues Met-90–Met-153 form the S4 RNA-binding domain.

Belongs to the universal ribosomal protein uS4 family. In terms of assembly, part of the 30S ribosomal subunit. Contacts protein S5. The interaction surface between S4 and S5 is involved in control of translational fidelity.

It localises to the plastid. Functionally, one of the primary rRNA binding proteins, it binds directly to 16S rRNA where it nucleates assembly of the body of the 30S subunit. Its function is as follows. With S5 and S12 plays an important role in translational accuracy. This Aneura mirabilis (Parasitic liverwort) protein is Small ribosomal subunit protein uS4c (rps4).